Here is a 195-residue protein sequence, read N- to C-terminus: Glucagon family neuropeptides (195 aa).

A signal peptide spans 1–20 (MAKSSRATLALLIYGILMRY). Positions 21–82 (SQCTPIGMGF…YYPPERRAET (62 aa)) are excised as a propeptide. Positions 113 to 132 (VGEEEEDEEDSEPLSKRHSD) are disordered. Acidic residues predominate over residues 115–124 (EEEEDEEDSE). Lys167 is subject to Lysine amide. A propeptide spanning residues 171-195 (LVVPSVWTGIRDTVIITPEKRGKRY) is cleaved from the precursor.

Belongs to the glucagon family. As to expression, brain, testis, ovary and stomach. Not pancreas, pituitary, muscle and liver.

The protein resides in the secreted. Its function is as follows. Primary role of GHRH is to release GH from the pituitary. In terms of biological role, PACAP plays pivotal roles as a neurotransmitter and/or a neuromodulator. This chain is Glucagon family neuropeptides, found in Clarias macrocephalus (Bighead catfish).